A 533-amino-acid polypeptide reads, in one-letter code: CTP synthase (533 aa).

Residues 1–270 (MVHLAKYIVV…GDYIVRRIEL (270 aa)) are amidoligase domain. Ser16 contacts CTP. Ser16 is a UTP binding site. 17-22 (SIGKGI) lines the ATP pocket. Tyr57 is an L-glutamine binding site. Asp74 is an ATP binding site. Residues Asp74 and Glu144 each coordinate Mg(2+). CTP contacts are provided by residues 151-153 (DIE), 191-196 (KTKPTQ), and Lys227. UTP is bound by residues 191 to 196 (KTKPTQ) and Lys227. Positions 303–533 (YVELEDSYIS…FLRAALERSR (231 aa)) constitute a Glutamine amidotransferase type-1 domain. Gly355 contacts L-glutamine. Cys382 serves as the catalytic Nucleophile; for glutamine hydrolysis. L-glutamine-binding positions include 383-386 (LGMQ), Glu405, and Arg462. Residues His507 and Glu509 contribute to the active site.

This sequence belongs to the CTP synthase family. As to quaternary structure, homotetramer.

It carries out the reaction UTP + L-glutamine + ATP + H2O = CTP + L-glutamate + ADP + phosphate + 2 H(+). The enzyme catalyses L-glutamine + H2O = L-glutamate + NH4(+). The catalysed reaction is UTP + NH4(+) + ATP = CTP + ADP + phosphate + 2 H(+). It participates in pyrimidine metabolism; CTP biosynthesis via de novo pathway; CTP from UDP: step 2/2. With respect to regulation, allosterically activated by GTP, when glutamine is the substrate; GTP has no effect on the reaction when ammonia is the substrate. The allosteric effector GTP functions by stabilizing the protein conformation that binds the tetrahedral intermediate(s) formed during glutamine hydrolysis. Inhibited by the product CTP, via allosteric rather than competitive inhibition. Its function is as follows. Catalyzes the ATP-dependent amination of UTP to CTP with either L-glutamine or ammonia as the source of nitrogen. Regulates intracellular CTP levels through interactions with the four ribonucleotide triphosphates. The protein is CTP synthase of Methanothermobacter thermautotrophicus (strain ATCC 29096 / DSM 1053 / JCM 10044 / NBRC 100330 / Delta H) (Methanobacterium thermoautotrophicum).